Consider the following 483-residue polypeptide: Teichuronic acid biosynthesis protein TuaB (483 aa).

A run of 11 helical transmembrane segments spans residues 15 to 34 (TSISTMCITIIQIVQFALLG), 41 to 63 (EFGLVGMITTVTVFAQIVLDMGF), 83 to 105 (WLNIMTGVLLFVLLYVSSPVIAG), 112 to 134 (LVFLVRILAIMFLIAPIGQQYQY), 154 to 176 (VLSFGYLAIAVFMMDAILAYVIS), 294 to 316 (LALVSFPLLIGLVSVSDAFITAV), 321 to 343 (WLAAVPILNVLAIVGILRVLMNP), 356 to 378 (LAFYWDSGVLLLYGLSLFAAVQT), 382 to 404 (LTVAWVYAIISVVNFLIGRWLLA), 411 to 433 (LSAYFQSIMKPFLITAAMGIIAF), and 448 to 470 (MRLAISVAAGALCYLFLLVKAYP).

It belongs to the polysaccharide synthase family.

Its subcellular location is the cell membrane. It functions in the pathway cell wall biogenesis; teichuronic acid biosynthesis. Functionally, might be involved in the translocation of teichuronic acid repeating units from the inner to the outer surface of the membrane. This Bacillus subtilis (strain 168) protein is Teichuronic acid biosynthesis protein TuaB (tuaB).